The primary structure comprises 208 residues: Small ribosomal subunit protein uS5 (208 aa).

In terms of domain architecture, S5 DRBM spans Leu28–Val91.

The protein belongs to the universal ribosomal protein uS5 family. As to quaternary structure, part of the 30S ribosomal subunit. Contacts proteins S4 and S8.

Its function is as follows. With S4 and S12 plays an important role in translational accuracy. Functionally, located at the back of the 30S subunit body where it stabilizes the conformation of the head with respect to the body. In Aquifex aeolicus (strain VF5), this protein is Small ribosomal subunit protein uS5.